We begin with the raw amino-acid sequence, 233 residues long: Protein Thf1 (233 aa).

Residues 183–204 (DKFSKDLELYRSNLDKMTQALA) adopt a coiled-coil conformation. The disordered stretch occupies residues 212-233 (ADRKKREQRQQQASTPVAPPNE).

This sequence belongs to the THF1 family.

Its function is as follows. May be involved in photosynthetic membrane biogenesis. The protein is Protein Thf1 of Nostoc sp. (strain PCC 7120 / SAG 25.82 / UTEX 2576).